We begin with the raw amino-acid sequence, 127 residues long: Major sperm protein isoform beta (127 aa).

Residue Ala-2 is modified to N-acetylalanine. Residues 9–126 (DINTQPGSKI…RRKNLPIEYN (118 aa)) enclose the MSP domain.

As to quaternary structure, forms filaments 10 nm wide, with a characteristic substructure repeating axially at 9 nm. Sperm.

It localises to the cell projection. The protein resides in the pseudopodium. It is found in the cytoplasm. Its subcellular location is the cytoskeleton. Functionally, central component in molecular interactions underlying sperm crawling. Forms an extensive filament system that extends from sperm villipoda, along the leading edge of the pseudopod. The chain is Major sperm protein isoform beta from Ascaris suum (Pig roundworm).